We begin with the raw amino-acid sequence, 1107 residues long: Copine family protein 1 (1107 aa).

The Extracellular portion of the chain corresponds to 1-22; that stretch reads MVFDARLGYDPDEWEECPEPEH. Residues 23 to 45 form a helical membrane-spanning segment; it reads FLVFSGFTRYMLTFAAIAFVYYF. Topologically, residues 46–1107 are cytoplasmic; the sequence is FKLLDDKNKK…IRREMMHNPL (1062 aa). A coiled-coil region spans residues 67–124; the sequence is VESVLAKAGDKLHDVKEQVQQHIPESAEELMREADQYLKEQAHSVQNNVHQFAEQAAN. Residues 478–488 are compositionally biased toward low complexity; the sequence is QLQQNQQQHQQ. Disordered stretches follow at residues 478–501 and 673–698; these read QLQQ…TADS and HEPE…SRQV. Over residues 492-501 the composition is skewed to basic and acidic residues; the sequence is IDRRRTTADS. The segment covering 687–698 has biased composition (polar residues); the sequence is KNPSFEATSRQV. In terms of domain architecture, VWFA spans 863 to 1023; it reads NLIFGIDYTA…LSIIVVGVGD (161 aa).

It belongs to the copine family. May interact (via VWFA domain) with unc-89 (via Ig-like C2-type 1-3) and unc-96 (via C-terminus); cpna-1 binding sites for unc-89 and unc-96 are different. May interact with pat-6. May interact with lim-9 (via LIM domains) and with scpl-1 (via FCP1 homology domain). In terms of tissue distribution, expressed in body wall muscles (at protein level).

Its subcellular location is the basal cell membrane. It is found in the cytoplasm. The protein localises to the myofibril. It localises to the sarcomere. The protein resides in the m line. Its function is as follows. Involved in the assembly of dense bodies and M lines during body wall muscle development. Acts by recruiting downstream of integrin-associated protein pat-6/actopaxin several dense bodies and M line components including unc-89, lim-9, scpl-1 and unc-96 to integrin-mediated attachment sites. This is Copine family protein 1 from Caenorhabditis elegans.